The following is a 190-amino-acid chain: Elongation factor P 2 (190 aa).

The protein belongs to the elongation factor P family.

The protein resides in the cytoplasm. It participates in protein biosynthesis; polypeptide chain elongation. Its function is as follows. Involved in peptide bond synthesis. Stimulates efficient translation and peptide-bond synthesis on native or reconstituted 70S ribosomes in vitro. Probably functions indirectly by altering the affinity of the ribosome for aminoacyl-tRNA, thus increasing their reactivity as acceptors for peptidyl transferase. The chain is Elongation factor P 2 (efp2) from Chlamydia pneumoniae (Chlamydophila pneumoniae).